The sequence spans 192 residues: Phosphoheptose isomerase (192 aa).

Positions 37-192 (LADSFKAGGK…IQLIEKEMEK (156 aa)) constitute an SIS domain. A substrate-binding site is contributed by 52–54 (NGG). 2 residues coordinate Zn(2+): H61 and E65. Residues E65, 93–94 (ND), 119–121 (STS), S124, and Q172 each bind substrate. Zn(2+)-binding residues include Q172 and H180.

This sequence belongs to the SIS family. GmhA subfamily. In terms of assembly, homotetramer. Zn(2+) serves as cofactor.

The protein resides in the cytoplasm. It carries out the reaction 2 D-sedoheptulose 7-phosphate = D-glycero-alpha-D-manno-heptose 7-phosphate + D-glycero-beta-D-manno-heptose 7-phosphate. It participates in carbohydrate biosynthesis; D-glycero-D-manno-heptose 7-phosphate biosynthesis; D-glycero-alpha-D-manno-heptose 7-phosphate and D-glycero-beta-D-manno-heptose 7-phosphate from sedoheptulose 7-phosphate: step 1/1. Its function is as follows. Catalyzes the isomerization of sedoheptulose 7-phosphate in D-glycero-D-manno-heptose 7-phosphate. This Proteus mirabilis (strain HI4320) protein is Phosphoheptose isomerase.